A 505-amino-acid polypeptide reads, in one-letter code: Olfactomedin-4 (505 aa).

The N-terminal stretch at 1–18 (MSYSLLFLLALQFCLGSA) is a signal peptide. 2 N-linked (GlcNAc...) asparagine glycosylation sites follow: Asn64 and Asn128. Residues 174–225 (HIIDMLEVEIRNMTLLVEKLESLDQNNVLSIRRQILALKTKLKECEASKSDL) adopt a coiled-coil conformation. One can recognise an Olfactomedin-like domain in the interval 237–499 (SCSHGGVVNI…LLNYDLVFLQ (263 aa)). Residues Cys238 and Cys429 are joined by a disulfide bond.

As to quaternary structure, homomultimer; disulfide-linked. Interacts with NDUFA13. Interacts with cell surface lectins (locutions ricinus communis agglutinin I, concanavalin A and wheat germ agglutinin) and cadherin. In terms of processing, N-glycosylated.

It localises to the secreted. The protein localises to the extracellular space. The protein resides in the mitochondrion. In terms of biological role, may promote proliferation of pancreatic cancer cells by favoring the transition from the S to G2/M phase. In myeloid leukemic cell lines, inhibits cell growth and induces cell differentiation and apoptosis. May play a role in the inhibition of EIF4EBP1 phosphorylation/deactivation. Facilitates cell adhesion, most probably through interaction with cell surface lectins and cadherin. The protein is Olfactomedin-4 (Olfm4) of Mus musculus (Mouse).